Here is a 151-residue protein sequence, read N- to C-terminus: SsrA-binding protein (151 aa).

Residues 132–151 (KRQTIKKRDQDREIHRKYGI) are disordered.

This sequence belongs to the SmpB family.

It localises to the cytoplasm. In terms of biological role, required for rescue of stalled ribosomes mediated by trans-translation. Binds to transfer-messenger RNA (tmRNA), required for stable association of tmRNA with ribosomes. tmRNA and SmpB together mimic tRNA shape, replacing the anticodon stem-loop with SmpB. tmRNA is encoded by the ssrA gene; the 2 termini fold to resemble tRNA(Ala) and it encodes a 'tag peptide', a short internal open reading frame. During trans-translation Ala-aminoacylated tmRNA acts like a tRNA, entering the A-site of stalled ribosomes, displacing the stalled mRNA. The ribosome then switches to translate the ORF on the tmRNA; the nascent peptide is terminated with the 'tag peptide' encoded by the tmRNA and targeted for degradation. The ribosome is freed to recommence translation, which seems to be the essential function of trans-translation. The sequence is that of SsrA-binding protein from Lactobacillus johnsonii (strain CNCM I-12250 / La1 / NCC 533).